Here is a 633-residue protein sequence, read N- to C-terminus: MDKERISYHESVQKMYERIKKDNMTNVWDRYEAQGIGGVPDRRCTFCMAGARCDLCSNGPCRSDAAKDKRGVCGITADGMAMRMMLLRNVMGASTYHYHTDQTIRTLRETAKGKTPYSIREPEKLRTFAGRLGIETLGSDSEIALYLCEFVEKDFNRPAYEPSRIVEILAPPERKKRWEELDIFPGGIYGEMMLSTSSCLTNVDGYYASLALKAMRLGIAMAYQSQIVNEYCQDILFGIPKPHTMRVDLGVLDPEYVNVLPNGHEPFLGFAMVQLARKPEWQEKAKAAGAKGLRVIASIETGQEMIQRWEEDDAFYGFTGNWISQEAVLASGSVDLFAADMNCSLPVAPLYAEKYGFKLMPVSELIAFEDITERLNYNPVEAGRQAAKLLNMAVENFKNRKNSGEPVLNLPVKEAVVGFSTESILDALGGTLDPLLDAIKSGAIKGVVGMVSCTTLRDYGQDVHSVAVVKELIKRNILVLSLGCGNGAMQVAGLCSPETREFAGDSLKAVCEALGVPPVLSYGTCTDTGRLADFLGAISAVMGVPIPDLPIAAAAPEYMEQKATIDAIFALALGLYTYVNPVPTVTGAPDLVKLLTEDCREVTGGVLNVEKDAVKAVDGIEQHIMEKRKKLGI.

[4Fe-4S] cluster contacts are provided by Cys-44, Cys-53, Cys-56, Cys-61, and Cys-73. The [Ni-4Fe-5S] cluster site is built by His-264, Cys-343, Cys-453, Cys-484, and Cys-525.

The protein belongs to the Ni-containing carbon monoxide dehydrogenase family. In terms of assembly, homodimer. Requires [4Fe-4S] cluster as cofactor. [Ni-4Fe-5S] cluster serves as cofactor.

The enzyme catalyses CO + 2 oxidized [2Fe-2S]-[ferredoxin] + H2O = 2 reduced [2Fe-2S]-[ferredoxin] + CO2 + 2 H(+). CODH oxidizes carbon monoxide coupled, via CooF, to the reduction of a hydrogen cation by a hydrogenase (possibly CooH). This chain is Carbon monoxide dehydrogenase 2 (cooS2), found in Methanosarcina acetivorans (strain ATCC 35395 / DSM 2834 / JCM 12185 / C2A).